A 419-amino-acid polypeptide reads, in one-letter code: Putative BTB/POZ domain-containing protein L85 (419 aa).

Residues 16-89 enclose the BTB domain; that stretch reads TDLTIVLKDD…FYDKTSTNSE (74 aa). The segment at 250–290 is disordered; the sequence is SSSNDSDEDASETESEHNSETESEHNSETESEHNSETESKH. Positions 263-290 are enriched in basic and acidic residues; it reads ESEHNSETESEHNSETESEHNSETESKH.

Belongs to the mimivirus BTB/WD family.

The chain is Putative BTB/POZ domain-containing protein L85 from Acanthamoeba polyphaga (Amoeba).